Consider the following 224-residue polypeptide: MQILLVEDDNTLFQELKKELEQWDFNVVGVEDFSHVMETFETFNPEIVILDVQLPKYDGFYWCRKMRQQSNVPILFLSSRDNPMDQVMSMELGADDYMQKPFYTNVLIAKLQAIYRRVYEFGVEEKRTLSWQDATVDLSKDSIQKDDKTIFLSKTEMIILEMLINKRNQIVTRDTLITALWDDEAFVSDNTLTVNVNRLRKKLSEIDMDSAIETKVGKGYLAHE.

The region spanning 2–115 (QILLVEDDNT…VLIAKLQAIY (114 aa)) is the Response regulatory domain. A 4-aspartylphosphate modification is found at aspartate 51. The segment at residues 126 to 224 (KRTLSWQDAT…KVGKGYLAHE (99 aa)) is a DNA-binding region (ompR/PhoB-type).

In terms of processing, phosphorylated by GraS.

The protein localises to the cytoplasm. Functionally, member of the two-component regulatory system GraR/GraS involved in resistance against cationic antimicrobial peptides (CAMPs). The polypeptide is Response regulator protein GraR (graR) (Staphylococcus epidermidis (strain ATCC 35984 / DSM 28319 / BCRC 17069 / CCUG 31568 / BM 3577 / RP62A)).